The primary structure comprises 134 residues: ATP synthase epsilon chain, chloroplastic (134 aa).

Belongs to the ATPase epsilon chain family. In terms of assembly, F-type ATPases have 2 components, CF(1) - the catalytic core - and CF(0) - the membrane proton channel. CF(1) has five subunits: alpha(3), beta(3), gamma(1), delta(1), epsilon(1). CF(0) has three main subunits: a, b and c.

Its subcellular location is the plastid. It is found in the chloroplast thylakoid membrane. Produces ATP from ADP in the presence of a proton gradient across the membrane. This Porphyra purpurea (Red seaweed) protein is ATP synthase epsilon chain, chloroplastic.